The primary structure comprises 214 residues: Type IV major pilin protein PilE1 (214 aa).

Residues Met1–Gly7 constitute a propeptide, leader sequence. Phe8 bears the N-methylphenylalanine mark. Residues Phe8 to Leu28 traverse the membrane as a helical segment. The cysteines at positions 127 and 161 are disulfide-linked. The tract at residues Ala182–Glu214 is disordered. A compositionally biased stretch (basic and acidic residues) spans Thr192–Glu214.

It belongs to the N-Me-Phe pilin family. In terms of assembly, the pili are polar flexible filaments of about 5.4 nanometers diameter and 2.5 micrometers average length; they consist of only a single polypeptide chain arranged in a helical configuration of five subunits per turn in the assembled pilus.

It localises to the fimbrium. The protein resides in the membrane. Functionally, major component of the type IV pilus (T4P) that plays a role in cellular adherence, microcolony formation, resistance to neutrophil mediated killing, twitching motility as well as transformation. Mediates the attachment and the formation of bacterial microcolonies on host epithelial cells. Mechanistically, pili retractation induces host NF-kappa-B activation in infected cells, which is temporally associated with the formation of gonococcal microcolonies. The sequence is that of Type IV major pilin protein PilE1 (pilE1) from Neisseria gonorrhoeae.